A 314-amino-acid chain; its full sequence is 1,4-dihydroxy-2-naphthoyl-CoA synthase (314 aa).

Residues R58, 103–107 (SGGDQ), Y115, 157–161 (WAAGG), T184, S190, Y287, and K302 each bind substrate.

It belongs to the enoyl-CoA hydratase/isomerase family. MenB subfamily.

The catalysed reaction is 2-succinylbenzoyl-CoA + H(+) = 1,4-dihydroxy-2-naphthoyl-CoA + H2O. It participates in quinol/quinone metabolism; 1,4-dihydroxy-2-naphthoate biosynthesis; 1,4-dihydroxy-2-naphthoate from chorismate: step 6/7. Its pathway is quinol/quinone metabolism; menaquinone biosynthesis. Functionally, converts o-succinylbenzoyl-CoA (OSB-CoA) to 1,4-dihydroxy-2-naphthoyl-CoA (DHNA-CoA). The protein is 1,4-dihydroxy-2-naphthoyl-CoA synthase of Mycobacterium tuberculosis (strain CDC 1551 / Oshkosh).